The primary structure comprises 840 residues: MAGKRKARDEEFIFTLSDEETPYINGGDFDEEDDDVAPSINKSKNTKTLKSRVEPSSKKRRNEESTTGHQNKKLKQQEQGQQKGLKGKRAIANGWDAENDSNGSGEDEEEEEDEEGEEGLLDSDFEFDIGGATNIGLVEEFDGWGAEDRDKQGNMGEAKKGVDLDEILCRRRQKKLESQEKKTREAAKSNVDDSFEGLSDDDGHNEDENEDNEMPNFDDDELLAPDAFGMGAEGESDEQGKANADKGSDDESMPDANGADEEDASDSDSVASPVAHPDDLRSDESSDSEEEDPEEVAKRNAFFAPEENPTKSEETSSNSTFQNFNLSRPILRGLAAVGFSAPTPIQRKAIPVGLLGKDLVGGAVTGSGKTAAFIIPILERLLYRPRKVPTSRVAILMPTRELAVQCYNVATKLATYTDITFCQLVGGFSLREQENVLKQRPDVIIATPGRFIDHMRNSASFTVDTLEILVLDEADRMLEDGFADELNEILNTIPKSRQTMLFSATMTDSVDKLIRVGLNRPVRLMVDSKKHTVGTLVQEFVRLRPGREGKRMGYLVLLCNTIYTNRVIVFFRQKKEAHRARIIFGLLGLKAAELHGSMSQEQRINAVEAFRDGKVPFLLATDLASRGLDIKGVESVINYEAPQSHEIYLHRVGRTARAGRSGRACTIAAEPDRKVVKAAVKAGRAQGAKIVSRVVDPAVADEWASKVEEMQAEIEDILKEEKEEKQLAQAEMQVKRGQNLIKHGSEIMARPKRTWFETEREKREAKKRALSELNGPDSVIKKEKRKLSGKEKKKLDDNRLREEGKIWKKGKKERESKGDMRSQGKGKAKKDKVKAKKAAR.

Disordered stretches follow at residues 1–133 (MAGK…GGAT) and 146–321 (AEDR…NSTF). A compositionally biased stretch (basic and acidic residues) spans 51–66 (SRVEPSSKKRRNEEST). Acidic residues predominate over residues 105–127 (GEDEEEEEDEEGEEGLLDSDFEF). Residues 146–191 (AEDRDKQGNMGEAKKGVDLDEILCRRRQKKLESQEKKTREAAKSNV) show a composition bias toward basic and acidic residues. Over residues 193–223 (DSFEGLSDDDGHNEDENEDNEMPNFDDDELL) the composition is skewed to acidic residues. Over residues 238-249 (EQGKANADKGSD) the composition is skewed to basic and acidic residues. 2 stretches are compositionally biased toward acidic residues: residues 250-266 (DESM…DASD) and 285-294 (SSDSEEEDPE). The Q motif motif lies at 319-347 (STFQNFNLSRPILRGLAAVGFSAPTPIQR). The Helicase ATP-binding domain occupies 350-524 (IPVGLLGKDL…RVGLNRPVRL (175 aa)). Residue 363–370 (AVTGSGKT) participates in ATP binding. A DEAD box motif is present at residues 472–475 (DEAD). Residues 554-733 (YLVLLCNTIY…EKQLAQAEMQ (180 aa)) form the Helicase C-terminal domain. Residues 766 to 840 (KKRALSELNG…DKVKAKKAAR (75 aa)) are disordered. Residues 786-822 (KLSGKEKKKLDDNRLREEGKIWKKGKKERESKGDMRS) are compositionally biased toward basic and acidic residues. The segment covering 824 to 840 (GKGKAKKDKVKAKKAAR) has biased composition (basic residues).

This sequence belongs to the DEAD box helicase family. DDX27/DRS1 subfamily. In terms of assembly, associates with pre-ribosomal particles.

Its subcellular location is the nucleus. It localises to the nucleolus. It catalyses the reaction ATP + H2O = ADP + phosphate + H(+). ATP-binding RNA helicase involved in ribosome assembly. This is ATP-dependent RNA helicase DRS1 (DRS1) from Coccidioides immitis (strain RS) (Valley fever fungus).